The sequence spans 500 residues: Nitrate/nitrite transporter NrtP (500 aa).

The next 12 helical transmembrane spans lie at 19–39 (WFAFFLTFVCWFNFAPFATTI), 52–72 (TLGICNLALTIPARLIIGMLL), 79–99 (ITYSILLMFAVVPCLATALAQ), 109–129 (LLMGIVGSGFVVGIRMVAEWF), 147–167 (FGAFGAEFALPILAISTSFFS), 175–195 (LAIALVGIITAIYGVIYYNTV), 220–240 (SFWAMMISNFGLIFALGLLAW), 247–267 (IHFLTLSQMYLTWLVLAGLFA), 364–384 (WTMTIISVGIGVSYLMAHFIN), 389–409 (IPVAIAVTMFAAYFAQAGCGA), 425–445 (IAGNVGAYGNFGGVVYLTIFS), and 451–471 (TLFSTMGIAALICAFMCAFFL).

Belongs to the major facilitator superfamily. Nitrate/nitrite porter (TC 2.A.1.8) family.

It localises to the cell inner membrane. Transport system for both nitrate and nitrite, with much higher affinity for nitrate than for nitrite. The protein is Nitrate/nitrite transporter NrtP of Nostoc punctiforme (strain ATCC 29133 / PCC 73102).